We begin with the raw amino-acid sequence, 321 residues long: CRISPR-associated endonuclease Cas1 2 (321 aa).

The Mn(2+) site is built by E150, H213, and E228.

The protein belongs to the CRISPR-associated endonuclease Cas1 family. As to quaternary structure, homodimer, forms a heterotetramer with a Cas2 homodimer. Mg(2+) serves as cofactor. Mn(2+) is required as a cofactor.

Its function is as follows. CRISPR (clustered regularly interspaced short palindromic repeat), is an adaptive immune system that provides protection against mobile genetic elements (viruses, transposable elements and conjugative plasmids). CRISPR clusters contain spacers, sequences complementary to antecedent mobile elements, and target invading nucleic acids. CRISPR clusters are transcribed and processed into CRISPR RNA (crRNA). Acts as a dsDNA endonuclease. Involved in the integration of spacer DNA into the CRISPR cassette. The polypeptide is CRISPR-associated endonuclease Cas1 2 (Moorella thermoacetica (strain ATCC 39073 / JCM 9320)).